The following is a 387-amino-acid chain: Phosphoglycerate kinase (387 aa).

Residues 21–23 (DLN), R36, and 59–62 (HLGR) contribute to the substrate site. N6-acetyllysine is present on K84. The substrate site is built by R113 and R146. Residues K197, E314, and 340 to 343 (GGDT) contribute to the ATP site.

This sequence belongs to the phosphoglycerate kinase family. Monomer.

The protein resides in the cytoplasm. It catalyses the reaction (2R)-3-phosphoglycerate + ATP = (2R)-3-phospho-glyceroyl phosphate + ADP. It functions in the pathway carbohydrate degradation; glycolysis; pyruvate from D-glyceraldehyde 3-phosphate: step 2/5. In Escherichia coli O139:H28 (strain E24377A / ETEC), this protein is Phosphoglycerate kinase.